A 134-amino-acid polypeptide reads, in one-letter code: Bet1-like protein At1g29060 (134 aa).

A compositionally biased stretch (gly residues) spans Met1 to Tyr12. The tract at residues Met1 to Gly31 is disordered. Residues Met1–His110 are Cytoplasmic-facing. Positions Asp40–Ser102 constitute a t-SNARE coiled-coil homology domain. The chain crosses the membrane as a helical; Anchor for type IV membrane protein span at residues Ile111–Met131. Residues Phe132–Arg134 are Vesicular-facing.

The protein belongs to the BET1 family.

It is found in the golgi apparatus membrane. The protein resides in the endoplasmic reticulum membrane. Its function is as follows. Required for vesicular transport from the ER to the Golgi complex. Functions as a SNARE associated with ER-derived vesicles. In Arabidopsis thaliana (Mouse-ear cress), this protein is Bet1-like protein At1g29060.